The primary structure comprises 198 residues: Recombination protein RecR (198 aa).

The C4-type zinc-finger motif lies at 57–72 (CSVCGRLTDDDPCSIC). One can recognise a Toprim domain in the interval 80–175 (TTILVLEDSR…KVTRLARGLA (96 aa)).

The protein belongs to the RecR family.

Its function is as follows. May play a role in DNA repair. It seems to be involved in an RecBC-independent recombinational process of DNA repair. It may act with RecF and RecO. The polypeptide is Recombination protein RecR (Streptococcus pneumoniae (strain Hungary19A-6)).